Reading from the N-terminus, the 482-residue chain is MFS-type transporter cnsL (482 aa).

Residues 73–93 (LFVCATLSGLDKTAISAAAVY) traverse the membrane as a helical segment. An N-linked (GlcNAc...) asparagine glycan is attached at asparagine 100. 9 helical membrane passes run 108–128 (WIGSAPFFGGLLFMGPLAYCL), 131–151 (VPAVPFFAFNVLCWGILEMSV), 170–190 (IILNVVAPIINGFVAWVVGYY), 199–219 (IIFLLVGALTIVTSVVVYFVL), 304–324 (LLAMPPGAMSTLSGIGLSYLA), 333–353 (AIVTVSILLPLFGAVLCYALP), 361–381 (LVGLYILYTYWAPYVTLVSVY), 392–412 (ITLYAWFYIAWATGNIIGPQT), and 426–446 (VAMIICYVVAMFAITAYGVVC).

Belongs to the major facilitator superfamily. Allantoate permease family.

It localises to the cell membrane. Functionally, MFS-type transporter; part of the gene cluster that mediates the biosynthesis of communesins, a prominent class of indole alkaloids with great potential as pharmaceuticals. With the MFS transporter cnsO, is most likely responsible for cummunesins secretion and thereby may contribute to intrinsic resistance. In Penicillium expansum (Blue mold rot fungus), this protein is MFS-type transporter cnsL.